Consider the following 703-residue polypeptide: Epidermal growth factor receptor (703 aa).

The signal sequence occupies residues 1-30; that stretch reads MGVRSPLSASGPRGAAVLVLLLLGVALCSA. Residues 31–654 lie on the Extracellular side of the membrane; the sequence is VEEKKVCQGT…GCPNGSKTPS (624 aa). The cysteines at positions 37 and 64 are disulfide-linked. N-linked (GlcNAc...) asparagine glycans are attached at residues Asn134, Asn190, and Asn200. 13 disulfides stabilise this stretch: Cys164–Cys194, Cys197–Cys206, Cys201–Cys214, Cys222–Cys230, Cys226–Cys238, Cys239–Cys247, Cys243–Cys255, Cys258–Cys267, Cys271–Cys298, Cys302–Cys314, Cys318–Cys333, Cys336–Cys340, and Cys344–Cys369. N-linked (GlcNAc...) asparagine glycosylation is found at Asn359, Asn368, and Asn420. 11 disulfide bridges follow: Cys477-Cys506, Cys513-Cys522, Cys517-Cys530, Cys533-Cys542, Cys546-Cys562, Cys565-Cys581, Cys569-Cys589, Cys592-Cys601, Cys605-Cys627, Cys630-Cys638, and Cys634-Cys646. Asn573 and Asn578 each carry an N-linked (GlcNAc...) asparagine glycan. Asn613 and Asn633 each carry an N-linked (GlcNAc...) asparagine glycan. Residue Asn648 is glycosylated (N-linked (GlcNAc...) asparagine). The helical transmembrane segment at 655 to 667 threads the bilayer; sequence IAAGVVGGLLCLV. At 668-703 the chain is on the cytoplasmic side; sequence VVGLGIGLYLRRRHIVRKRTLRRLLQERELVEPLTP. Phosphothreonine occurs at positions 687 and 702.

The protein belongs to the protein kinase superfamily. Tyr protein kinase family. EGF receptor subfamily. Binding of the ligand triggers homo- and/or heterodimerization of the receptor triggering its autophosphorylation. Phosphorylated. Autophosphorylates.

It localises to the cell membrane. The protein localises to the endoplasmic reticulum membrane. Its subcellular location is the golgi apparatus membrane. The protein resides in the nucleus membrane. It is found in the endosome. It localises to the endosome membrane. The protein localises to the nucleus. The enzyme catalyses L-tyrosyl-[protein] + ATP = O-phospho-L-tyrosyl-[protein] + ADP + H(+). Endocytosis and inhibition of the activated EGFR by phosphatases constitute immediate regulatory mechanisms. Moreover, inducible feedback inhibitors may constitute alternative regulatory mechanisms for the EGFR signaling. Functionally, receptor tyrosine kinase binding ligands of the EGF family and activating several signaling cascades to convert extracellular cues into appropriate cellular responses. Known ligands include EGF and TGFA/TGF-alpha. Ligand binding triggers receptor homo- and/or heterodimerization and autophosphorylation on key cytoplasmic residues. The phosphorylated receptor recruits adapter proteins like GRB2 which in turn activates complex downstream signaling cascades. Activates at least 4 major downstream signaling cascades including the RAS-RAF-MEK-ERK, PI3 kinase-AKT, PLCgamma-PKC and STATs modules. May also activate the NF-kappa-B signaling cascade. This Gallus gallus (Chicken) protein is Epidermal growth factor receptor (EGFR).